Here is a 346-residue protein sequence, read N- to C-terminus: Uroporphyrinogen decarboxylase (346 aa).

Residues 23–27 (RQAGR), D72, Y149, T204, and H318 each bind substrate.

Belongs to the uroporphyrinogen decarboxylase family. Homodimer.

It localises to the cytoplasm. It catalyses the reaction uroporphyrinogen III + 4 H(+) = coproporphyrinogen III + 4 CO2. It participates in porphyrin-containing compound metabolism; protoporphyrin-IX biosynthesis; coproporphyrinogen-III from 5-aminolevulinate: step 4/4. Functionally, catalyzes the decarboxylation of four acetate groups of uroporphyrinogen-III to yield coproporphyrinogen-III. This Synechococcus sp. (strain JA-2-3B'a(2-13)) (Cyanobacteria bacterium Yellowstone B-Prime) protein is Uroporphyrinogen decarboxylase.